A 124-amino-acid polypeptide reads, in one-letter code: UPF0231 protein SO_3983 (124 aa).

The protein belongs to the UPF0231 family.

The polypeptide is UPF0231 protein SO_3983 (Shewanella oneidensis (strain ATCC 700550 / JCM 31522 / CIP 106686 / LMG 19005 / NCIMB 14063 / MR-1)).